Reading from the N-terminus, the 299-residue chain is ATP phosphoribosyltransferase (299 aa).

Belongs to the ATP phosphoribosyltransferase family. Long subfamily. Mg(2+) is required as a cofactor.

The protein localises to the cytoplasm. The enzyme catalyses 1-(5-phospho-beta-D-ribosyl)-ATP + diphosphate = 5-phospho-alpha-D-ribose 1-diphosphate + ATP. The protein operates within amino-acid biosynthesis; L-histidine biosynthesis; L-histidine from 5-phospho-alpha-D-ribose 1-diphosphate: step 1/9. Feedback inhibited by histidine. In terms of biological role, catalyzes the condensation of ATP and 5-phosphoribose 1-diphosphate to form N'-(5'-phosphoribosyl)-ATP (PR-ATP). Has a crucial role in the pathway because the rate of histidine biosynthesis seems to be controlled primarily by regulation of HisG enzymatic activity. The protein is ATP phosphoribosyltransferase of Shewanella loihica (strain ATCC BAA-1088 / PV-4).